The primary structure comprises 242 residues: Type III pantothenate kinase (242 aa).

Position 7-14 (aspartate 7–lysine 14) interacts with ATP. Residues tyrosine 91 and glycine 98–arginine 101 contribute to the substrate site. The Proton acceptor role is filled by aspartate 100. Threonine 121 contacts ATP. Residue threonine 171 participates in substrate binding.

This sequence belongs to the type III pantothenate kinase family. As to quaternary structure, homodimer. NH4(+) serves as cofactor. The cofactor is K(+).

It is found in the cytoplasm. It carries out the reaction (R)-pantothenate + ATP = (R)-4'-phosphopantothenate + ADP + H(+). The protein operates within cofactor biosynthesis; coenzyme A biosynthesis; CoA from (R)-pantothenate: step 1/5. Catalyzes the phosphorylation of pantothenate (Pan), the first step in CoA biosynthesis. In Xanthomonas axonopodis pv. citri (strain 306), this protein is Type III pantothenate kinase.